The following is a 362-amino-acid chain: MSQNSLRLVEDKSVDKSKALEAALSQIERSFGKGSIMKLGSNENVIEIETISTGSLGLDIALGVGGLPKGRIIEIYGPESSGKTTLALQTIAESQKKGGICAFVDAEHALDPVYARKLGVDLQNLLISQPDTGEQALEITDTLVRSGAVDVLVVDSVAALTPRAEIEGEMGDSLPGLQARLMSQALRKLTASISKSNTMVIFINQIRMKIGVMFGSPETTTGGNALKFYASVRLDIRRIGSVKEREEVIGNQTRVKVVKNKMAPPFKQVEFDIMYGEGVSKTGELVDLGVKAGIVEKSGAWFSYNSQRLGQGRENAKTFLRDNPDLAREIELALRQNAGLIADRFLQNGGPDADDGDAAADM.

Residue 77-84 participates in ATP binding; sequence GPESSGKT.

The protein belongs to the RecA family.

It is found in the cytoplasm. Functionally, can catalyze the hydrolysis of ATP in the presence of single-stranded DNA, the ATP-dependent uptake of single-stranded DNA by duplex DNA, and the ATP-dependent hybridization of homologous single-stranded DNAs. It interacts with LexA causing its activation and leading to its autocatalytic cleavage. The chain is Protein RecA from Rhizobium etli (strain CIAT 652).